A 212-amino-acid polypeptide reads, in one-letter code: Pyridoxine/pyridoxamine 5'-phosphate oxidase 1 (212 aa).

Substrate-binding positions include 8 to 11 (RTDY) and K66. Residues 61–66 (RIVLLK), 76–77 (FT), K83, and Q105 contribute to the FMN site. Substrate contacts are provided by Y123, R127, and S131. FMN is bound by residues 140-141 (QS) and W184. Position 190–192 (190–192 (RLH)) interacts with substrate. R194 contacts FMN.

This sequence belongs to the pyridoxamine 5'-phosphate oxidase family. Homodimer. FMN serves as cofactor.

The enzyme catalyses pyridoxamine 5'-phosphate + O2 + H2O = pyridoxal 5'-phosphate + H2O2 + NH4(+). It carries out the reaction pyridoxine 5'-phosphate + O2 = pyridoxal 5'-phosphate + H2O2. Its pathway is cofactor metabolism; pyridoxal 5'-phosphate salvage; pyridoxal 5'-phosphate from pyridoxamine 5'-phosphate: step 1/1. The protein operates within cofactor metabolism; pyridoxal 5'-phosphate salvage; pyridoxal 5'-phosphate from pyridoxine 5'-phosphate: step 1/1. Its function is as follows. Catalyzes the oxidation of either pyridoxine 5'-phosphate (PNP) or pyridoxamine 5'-phosphate (PMP) into pyridoxal 5'-phosphate (PLP). The protein is Pyridoxine/pyridoxamine 5'-phosphate oxidase 1 of Ralstonia nicotianae (strain ATCC BAA-1114 / GMI1000) (Ralstonia solanacearum).